We begin with the raw amino-acid sequence, 123 residues long: MAKSIRSKWKRKMRAEKRKKNAPKELARLKNVLAKGSEVLMDDVKEIATVVPSKKINEKTDMDVDAPEGDSSKMDMELKRNKKNLRDQHGQYPVWLNQRQQKKLKSQCGKKKGKSKQAKKLAW.

Residues 1 to 21 are compositionally biased toward basic residues; that stretch reads MAKSIRSKWKRKMRAEKRKKN. 2 disordered regions span residues 1–23 and 55–123; these read MAKSIRSKWKRKMRAEKRKKNAP and KINE…KLAW. The span at 70 to 89 shows a compositional bias: basic and acidic residues; the sequence is DSSKMDMELKRNKKNLRDQH. The segment covering 100 to 123 has biased composition (basic residues); the sequence is QQKKLKSQCGKKKGKSKQAKKLAW.

Belongs to the learning-associated protein family.

The protein localises to the nucleus. Its subcellular location is the nucleolus. The protein resides in the chromosome. Regulates dendritic and spine growth and synaptic transmission. This is Protein LLP homolog (llph) from Xenopus tropicalis (Western clawed frog).